Reading from the N-terminus, the 272-residue chain is Shikimate dehydrogenase (NADP(+)) (272 aa).

Shikimate-binding positions include 19–21 (SLS) and Thr66. Residue Lys70 is the Proton acceptor of the active site. Position 82 (Glu82) interacts with NADP(+). Asn91 and Asp106 together coordinate shikimate. NADP(+)-binding positions include 129–133 (GAGGA), 151–156 (NRTPEK), and Ile214. Tyr216 is a binding site for shikimate. Gly237 is a binding site for NADP(+).

Belongs to the shikimate dehydrogenase family. In terms of assembly, homodimer.

The enzyme catalyses shikimate + NADP(+) = 3-dehydroshikimate + NADPH + H(+). It participates in metabolic intermediate biosynthesis; chorismate biosynthesis; chorismate from D-erythrose 4-phosphate and phosphoenolpyruvate: step 4/7. Functionally, involved in the biosynthesis of the chorismate, which leads to the biosynthesis of aromatic amino acids. Catalyzes the reversible NADPH linked reduction of 3-dehydroshikimate (DHSA) to yield shikimate (SA). This chain is Shikimate dehydrogenase (NADP(+)), found in Thermococcus kodakarensis (strain ATCC BAA-918 / JCM 12380 / KOD1) (Pyrococcus kodakaraensis (strain KOD1)).